Reading from the N-terminus, the 353-residue chain is Histidinol-phosphate aminotransferase (353 aa).

Position 211 is an N6-(pyridoxal phosphate)lysine (Lys211).

The protein belongs to the class-II pyridoxal-phosphate-dependent aminotransferase family. Histidinol-phosphate aminotransferase subfamily. As to quaternary structure, homodimer. The cofactor is pyridoxal 5'-phosphate.

It carries out the reaction L-histidinol phosphate + 2-oxoglutarate = 3-(imidazol-4-yl)-2-oxopropyl phosphate + L-glutamate. It functions in the pathway amino-acid biosynthesis; L-histidine biosynthesis; L-histidine from 5-phospho-alpha-D-ribose 1-diphosphate: step 7/9. The chain is Histidinol-phosphate aminotransferase from Marinomonas sp. (strain MWYL1).